An 856-amino-acid polypeptide reads, in one-letter code: MTVKGLETHTPMMQQFLRIKAENPDTLLFYRMGDFYELFFDDAKRASQLLDITLTKRGSSNGQPIPMAGLPYHAVEGYLAKLVQQGVSVAICEQIGDPATSKGPVDRQVVRIVTPGTVSDEALLSERRDNLVAAIYQNSKGFGYATLDITSGRFMLSEPETEEAMQAELQRTSPAELLYPEDFTQMHIIEAIKGTRRRPVWEFDLDTARQQLTMQFGTRDLIGFGVEKTERGLSAAGCLLQYVKDTQRTALPHIRAITLDSKDHSVILDAATRRNLELTQNLSGGFDNTLASVLDHTATPMGSRLLKRWLHQPIRDTKQLNHRLDAIAAFKDTGMFIEVAEVLHHMGDLERILARLALRSARPRDLARMRSALQSLPQLADLLADIEQPRIGELAKYSAPMDELCELLERAIIENPPVIIRDGGVLAPGYNAELDEWRDLADGAKKFLDDLETREREQHGIDSLKVGFNQVHGFFIQISRGQSHLAPDHYVRRQTLKNAERYIIPELKEHEDKVLSSKSKALGLEKKLWEELFDQLLPHLERLQNAASALSELDVLANLAERADTLNYCRPELTDQTGIEIAAGRHPVVEQVLSEPFIANPTSLHHDRRMLIITGPNMGGKSTYMRQTALIALMAHVGSFVPAEAVKIGSLDRIFTRIGASDDLASGRSTFMVEMTETANILHNATSKSLVLMDEIGRGTSTYDGLSLAWASAEWLAEKISAMTLFATHYFELTELPSMMDGLANVHLDAVEHGDEIAFMHAVQEGAASKSYGLAVASLAGVPKAVIKRAKAKLTQLETTGHQQAIKNPSKAPREEQQLTLLPEPSDVEEALAKVNPDEMTPRQALDELYRLKALM.

ATP is bound at residue 615–622 (GPNMGGKS). A compositionally biased stretch (polar residues) spans 798 to 807 (ETTGHQQAIK). The disordered stretch occupies residues 798–817 (ETTGHQQAIKNPSKAPREEQ).

It belongs to the DNA mismatch repair MutS family.

In terms of biological role, this protein is involved in the repair of mismatches in DNA. It is possible that it carries out the mismatch recognition step. This protein has a weak ATPase activity. This is DNA mismatch repair protein MutS from Photobacterium profundum (strain SS9).